A 124-amino-acid polypeptide reads, in one-letter code: Small ribosomal subunit protein uS12 (124 aa).

A 3-methylthioaspartic acid modification is found at D89. At K108 the chain carries N6-acetyllysine.

Belongs to the universal ribosomal protein uS12 family. As to quaternary structure, part of the 30S ribosomal subunit. Contacts proteins S8 and S17. May interact with IF1 in the 30S initiation complex.

With S4 and S5 plays an important role in translational accuracy. In terms of biological role, interacts with and stabilizes bases of the 16S rRNA that are involved in tRNA selection in the A site and with the mRNA backbone. Located at the interface of the 30S and 50S subunits, it traverses the body of the 30S subunit contacting proteins on the other side and probably holding the rRNA structure together. The combined cluster of proteins S8, S12 and S17 appears to hold together the shoulder and platform of the 30S subunit. This chain is Small ribosomal subunit protein uS12, found in Escherichia coli O139:H28 (strain E24377A / ETEC).